A 155-amino-acid polypeptide reads, in one-letter code: Small ribosomal subunit protein uS7 (155 aa).

The protein belongs to the universal ribosomal protein uS7 family. In terms of assembly, part of the 30S ribosomal subunit. Contacts proteins S9 and S11.

Its function is as follows. One of the primary rRNA binding proteins, it binds directly to 16S rRNA where it nucleates assembly of the head domain of the 30S subunit. Is located at the subunit interface close to the decoding center, probably blocks exit of the E-site tRNA. The polypeptide is Small ribosomal subunit protein uS7 (Xylella fastidiosa (strain M23)).